An 81-amino-acid polypeptide reads, in one-letter code: Putative membrane protein insertion efficiency factor (81 aa).

The interval 61-81 (NDGGYDPVPPAPSSRTSSIAE) is disordered.

This sequence belongs to the UPF0161 family.

It is found in the cell inner membrane. Functionally, could be involved in insertion of integral membrane proteins into the membrane. This Pseudomonas putida (strain ATCC 47054 / DSM 6125 / CFBP 8728 / NCIMB 11950 / KT2440) protein is Putative membrane protein insertion efficiency factor.